Here is a 423-residue protein sequence, read N- to C-terminus: UPF0229 protein PSPA7_0730 (423 aa).

Residues 84 to 107 (AGEHIARPSGGGGGRGGGKASNSG) form a disordered region. A compositionally biased stretch (gly residues) spans 92–102 (SGGGGGRGGGK).

Belongs to the UPF0229 family.

The polypeptide is UPF0229 protein PSPA7_0730 (Pseudomonas paraeruginosa (strain DSM 24068 / PA7) (Pseudomonas aeruginosa (strain PA7))).